Consider the following 758-residue polypeptide: Protein hunchback (758 aa).

Disordered regions lie at residues glutamate 30 to serine 51 and glutamate 172 to lysine 214. Residues serine 39–serine 51 are compositionally biased toward polar residues. Phosphothreonine is present on threonine 178. Serine 188, serine 207, serine 209, and serine 210 each carry phosphoserine. The segment covering glutamate 198 to lysine 214 has biased composition (basic and acidic residues). 4 C2H2-type zinc fingers span residues tyrosine 240 to histidine 262, leucine 269 to histidine 291, phenylalanine 297 to histidine 319, and tyrosine 325 to histidine 349. 2 disordered regions span residues leucine 365–threonine 416 and glutamine 513–lysine 536. Low complexity-rich tracts occupy residues valine 398–alanine 415 and glutamine 513–serine 522. Residues aspartate 523–glutamate 532 show a composition bias toward acidic residues. Serine 537 and serine 540 each carry phosphoserine. Residues methionine 603–serine 695 form a disordered region. The span at alanine 652–serine 695 shows a compositional bias: low complexity. 2 C2H2-type zinc fingers span residues tyrosine 705 to histidine 727 and phenylalanine 733 to histidine 757.

Belongs to the hunchback C2H2-type zinc-finger protein family. As to expression, in embryo, expression of maternal transcript is highest in anterior region. Zygotic transcript is expressed in anterior region until the beginning of gastrulation and in posterior region until early gastrulation. After this, it is expressed in developing nervous system.

The protein resides in the nucleus. Gap class segmentation protein that controls development of head structures. The chain is Protein hunchback from Drosophila melanogaster (Fruit fly).